Reading from the N-terminus, the 320-residue chain is tRNA uridine(34) hydroxylase (320 aa).

A Rhodanese domain is found at 125–221; the sequence is KEKRPLLLDV…YGLKQGSEHW (97 aa). C181 acts as the Cysteine persulfide intermediate in catalysis.

This sequence belongs to the TrhO family.

The catalysed reaction is uridine(34) in tRNA + AH2 + O2 = 5-hydroxyuridine(34) in tRNA + A + H2O. In terms of biological role, catalyzes oxygen-dependent 5-hydroxyuridine (ho5U) modification at position 34 in tRNAs. The sequence is that of tRNA uridine(34) hydroxylase from Protochlamydia amoebophila (strain UWE25).